The sequence spans 475 residues: Probable sensor histidine kinase TcrY (475 aa).

The Extracellular segment spans residues Met1 to Leu153. A helical transmembrane segment spans residues Ile154 to Ile174. Over Ile175–Arg475 the chain is Cytoplasmic. Positions Lys176–Ser238 constitute an HAMP domain. The 214-residue stretch at Asp253–Gly466 folds into the Histidine kinase domain. His256 carries the post-translational modification Phosphohistidine; by autocatalysis.

In terms of assembly, homodimer. A divalent metal cation serves as cofactor. Autophosphorylated.

The protein localises to the cell membrane. The enzyme catalyses ATP + protein L-histidine = ADP + protein N-phospho-L-histidine.. Its function is as follows. Member of the two-component regulatory system TcrY/TcrX. Activates TcrX by phosphorylation. The protein is Probable sensor histidine kinase TcrY (tcrY) of Mycobacterium tuberculosis (strain ATCC 25618 / H37Rv).